A 4599-amino-acid polypeptide reads, in one-letter code: Low-density lipoprotein receptor-related protein 1B (4599 aa).

Positions 1-20 (MSEFLLALLTLSGLLPIARV) are cleaved as a signal peptide. Residues 25–4444 (ADRDQQLCDP…KSDHISTRSI (4420 aa)) are Extracellular-facing. LDL-receptor class A domains follow at residues 31 to 70 (LCDP…DTCP) and 76 to 114 (KCPL…VHCQ). Cystine bridges form between Cys-32/Cys-45, Cys-39/Cys-58, Cys-52/Cys-69, Cys-77/Cys-90, Cys-84/Cys-103, Cys-97/Cys-113, Cys-120/Cys-129, Cys-125/Cys-138, Cys-140/Cys-153, Cys-159/Cys-169, Cys-165/Cys-178, and Cys-180/Cys-193. Residues 116-154 (LLSNCQQLNCQYKCTMVRNSTRCYCEDGFEITEDGRSCK) form the EGF-like 1 domain. A glycan (N-linked (GlcNAc...) asparagine) is linked at Asn-134. The region spanning 155-194 (DQDECAVYGTCSQTCRNTHGSYTCSCVEGYLMQPDNRSCK) is the EGF-like 2; calcium-binding domain. N-linked (GlcNAc...) asparagine glycosylation is found at Asn-190, Asn-220, Asn-313, and Asn-360. 3 LDL-receptor class B repeats span residues 295-337 (RNLY…DPIA), 338-381 (GKLF…DLVN), and 382-425 (KLVY…FEDY). Asn-443 is a glycosylation site (N-linked (GlcNAc...) asparagine). Residues 471–517 (RSHACEVDPYGMPGGCSHICLLSSSYKTRTCRCRTGFNLGSDGRSCK) form the EGF-like 3 domain. LDL-receptor class B repeat units follow at residues 568–610 (NYIY…DWIG), 611–656 (NNLY…DPVN), 657–706 (GWMY…DFHT), and 707–750 (NTLY…HGNY). Residues Asn-725 and Asn-758 are each glycosylated (N-linked (GlcNAc...) asparagine). An EGF-like 4 domain is found at 794–834 (GDNMCRVNNGGCSTLCLAIPGGRVCACADNQLLDENGTTCT). 6 disulfides stabilise this stretch: Cys-798–Cys-809, Cys-805–Cys-818, Cys-820–Cys-833, Cys-845–Cys-857, Cys-852–Cys-870, and Cys-864–Cys-881. Asn-829 is a glycosylation site (N-linked (GlcNAc...) asparagine). Residues 844 to 882 (ICKAGEFRCKNRHCIQARWKCDGDDDCLDGSDEDSVNCF) form the LDL-receptor class A 3 domain. N-linked (GlcNAc...) asparagine glycosylation is present at Asn-883. LDL-receptor class A domains follow at residues 885–923 (SCPD…QTCT), 926–963 (TCQV…ASCE), 966–1003 (TCEP…VGCV), 1005–1043 (SCFD…INCT), 1052–1089 (GCNG…KGCN), 1094–1132 (LCDH…DDCD), and 1135–1174 (LCGP…YLCD). Cystine bridges form between Cys-886/Cys-898, Cys-893/Cys-911, Cys-905/Cys-922, Cys-927/Cys-939, Cys-934/Cys-952, Cys-946/Cys-962, Cys-967/Cys-980, Cys-975/Cys-993, Cys-987/Cys-1002, Cys-1006/Cys-1018, Cys-1013/Cys-1031, Cys-1025/Cys-1042, Cys-1053/Cys-1066, Cys-1060/Cys-1079, and Cys-1073/Cys-1088. An N-linked (GlcNAc...) asparagine glycan is attached at Asn-919. The N-linked (GlcNAc...) asparagine glycan is linked to Asn-1041. Asn-1089 carries N-linked (GlcNAc...) asparagine glycosylation. 6 disulfides stabilise this stretch: Cys-1095/Cys-1109, Cys-1103/Cys-1122, Cys-1116/Cys-1131, Cys-1136/Cys-1150, Cys-1143/Cys-1163, and Cys-1157/Cys-1173. N-linked (GlcNAc...) asparagine glycosylation occurs at Asn-1145. 2 consecutive EGF-like domains span residues 1174–1213 (DECS…KTCE) and 1214–1253 (IVDY…ESCT). Asn-1209 carries an N-linked (GlcNAc...) asparagine glycan. An N-linked (GlcNAc...) asparagine glycan is attached at Asn-1298. LDL-receptor class B repeat units follow at residues 1300 to 1346 (SLLY…DWIA), 1347 to 1389 (GNIY…DPRY), 1390 to 1436 (GILF…DHFE), 1437 to 1480 (KRIV…LYGS), and 1481 to 1522 (EVYW…YHPS). N-linked (GlcNAc...) asparagine glycosylation is found at Asn-1502, Asn-1549, and Asn-1636. The region spanning 1527–1570 (APNPCAANDGKGPCSHMCLINHNRSAACACPHLMKLSSDKKTCY) is the EGF-like 7 domain. LDL-receptor class B repeat units follow at residues 1618-1660 (ERLY…DWVS), 1661-1704 (RNLY…HPVR), 1705-1744 (GKLY…DYVE), and 1745-1787 (NKLY…TIMD). N-linked (GlcNAc...) asparagine glycans are attached at residues Asn-1754 and Asn-1816. The region spanning 1834 to 1875 (GSNSCQLNNGGCSQLCLPTSETTRTCMCTVGYYLQKNRMSCQ) is the EGF-like 8 domain. 3 cysteine pairs are disulfide-bonded: Cys-1838/Cys-1849, Cys-1845/Cys-1859, and Cys-1861/Cys-1874. A glycan (N-linked (GlcNAc...) asparagine) is linked at Asn-1921. 4 LDL-receptor class B repeats span residues 1922–1964 (DTIY…DWIA), 1965–2007 (GNIY…HPEK), 2008–2051 (GLLF…DYEE), and 2052–2095 (NKLY…FGAY). N-linked (GlcNAc...) asparagine glycosylation is present at Asn-1983. N-linked (GlcNAc...) asparagine glycosylation occurs at Asn-2105. Residues 2143 to 2183 (GTNVCARDNGGCKQLCLYRGNSRRTCACAHGYLAEDGVTCL) enclose the EGF-like 9 domain. 3 disulfide bridges follow: Cys-2147–Cys-2158, Cys-2154–Cys-2168, and Cys-2170–Cys-2182. LDL-receptor class B repeat units follow at residues 2239–2280 (NRIF…HRAW), 2281–2329 (DTLY…DECQ), 2330–2374 (NLMF…DYRA), 2375–2416 (EKLY…VYDN), and 2417–2459 (YIFW…VAND). 3 N-linked (GlcNAc...) asparagine glycosylation sites follow: Asn-2458, Asn-2488, and Asn-2507. The EGF-like 10 domain maps to 2464–2504 (ELSPCALLNGGCHDLCLLTPNGRVNCSCRGDRILLEDNRCV). One can recognise an LDL-receptor class A 11 domain in the interval 2509–2548 (SCNAYSEFECGNGECIDYQLTCDGIPHCKDKSDEKLLYCE). Disulfide bonds link Cys-2510–Cys-2523, Cys-2518–Cys-2536, and Cys-2530–Cys-2547. N-linked (GlcNAc...) asparagine glycosylation occurs at Asn-2549. 6 consecutive LDL-receptor class A domains span residues 2551-2587 (SCRR…LDCK), 2590-2626 (TCAT…KNCN), 2629-2675 (DCTH…LKCP), 2681-2717 (KCEE…FHCD), 2719-2757 (SCSW…SICG), and 2760-2800 (TCAA…AGCA). Intrachain disulfides connect Cys-2552–Cys-2564, Cys-2559–Cys-2577, Cys-2571–Cys-2586, Cys-2591–Cys-2603, Cys-2598–Cys-2616, and Cys-2610–Cys-2625. 2 N-linked (GlcNAc...) asparagine glycosylation sites follow: Asn-2626 and Asn-2647. Intrachain disulfides connect Cys-2630/Cys-2652, Cys-2646/Cys-2665, Cys-2659/Cys-2674, Cys-2682/Cys-2694, Cys-2689/Cys-2707, Cys-2701/Cys-2716, Cys-2720/Cys-2732, Cys-2727/Cys-2745, Cys-2739/Cys-2756, Cys-2761/Cys-2774, Cys-2768/Cys-2787, and Cys-2781/Cys-2799. A glycan (N-linked (GlcNAc...) asparagine) is linked at Asn-2802. 3 LDL-receptor class A domains span residues 2804-2841 (TCDE…PQCG), 2844-2885 (QCGT…PKCK), and 2890-2926 (SCNS…RNCH). Disulfide bonds link Cys-2805/Cys-2817, Cys-2812/Cys-2830, Cys-2824/Cys-2840, Cys-2845/Cys-2857, Cys-2852/Cys-2871, Cys-2865/Cys-2884, Cys-2891/Cys-2903, Cys-2898/Cys-2916, Cys-2910/Cys-2925, Cys-2930/Cys-2942, Cys-2938/Cys-2951, Cys-2953/Cys-2966, Cys-2972/Cys-2982, Cys-2978/Cys-2991, and Cys-2993/Cys-3007. Asn-2892 carries an N-linked (GlcNAc...) asparagine glycan. In terms of domain architecture, EGF-like 11 spans 2927–2967 (INECLSKKVSGCSQDCQDLPVSYKCKCWPGFQLKDDGKTCV). In terms of domain architecture, EGF-like 12; calcium-binding spans 2968-3008 (DIDECSSGFPCSQQCINTYGTYKCLCTDGYEIQPDNPNGCK). Residues Asn-3034, Asn-3066, and Asn-3076 are each glycosylated (N-linked (GlcNAc...) asparagine). LDL-receptor class B repeat units follow at residues 3055–3098 (EFIY…DWIG), 3099–3141 (KNLY…DPQA), 3142–3185 (GYLY…DYVN), 3186–3224 (RRLY…TLFE), and 3225–3268 (DYIY…HSYR). Asn-3164 carries N-linked (GlcNAc...) asparagine glycosylation. Residues 3273 to 3314 (SKHLCMINNGGCSHLCLLAPGKTHTCACPTNFYLAADNRTCL) form the EGF-like 13 domain. N-linked (GlcNAc...) asparagine glycosylation is found at Asn-3310 and Asn-3316. LDL-receptor class A domains are found at residues 3316 to 3353 (NCTA…DDCP), 3356 to 3392 (RCQP…LNCD), 3395 to 3432 (VCLS…RDCP), 3435 to 3472 (SCSP…ANCD), 3475 to 3511 (TCGP…ENCK), 3514 to 3550 (TCTL…RNCE), 3552 to 3588 (SCSK…KSCE), 3593 to 3629 (TCSS…MDCV), 3631 to 3668 (ECKE…ENCE), 3673 to 3711 (ICRA…DMCV), 3714 to 3752 (LCPS…DHCG), and 3761 to 3797 (PCKK…QGCR). Cystine bridges form between Cys-3317–Cys-3329, Cys-3324–Cys-3342, Cys-3336–Cys-3352, Cys-3357–Cys-3369, Cys-3364–Cys-3382, Cys-3376–Cys-3391, Cys-3396–Cys-3409, Cys-3403–Cys-3422, Cys-3416–Cys-3431, Cys-3436–Cys-3449, Cys-3443–Cys-3462, Cys-3456–Cys-3471, Cys-3476–Cys-3488, Cys-3483–Cys-3501, Cys-3495–Cys-3510, Cys-3515–Cys-3527, Cys-3522–Cys-3540, Cys-3534–Cys-3549, Cys-3553–Cys-3565, Cys-3560–Cys-3578, Cys-3572–Cys-3587, Cys-3594–Cys-3606, Cys-3601–Cys-3619, Cys-3613–Cys-3628, Cys-3632–Cys-3645, Cys-3639–Cys-3658, Cys-3652–Cys-3667, Cys-3674–Cys-3686, Cys-3681–Cys-3699, Cys-3693–Cys-3710, Cys-3715–Cys-3729, Cys-3723–Cys-3742, Cys-3736–Cys-3751, Cys-3762–Cys-3774, Cys-3769–Cys-3787, Cys-3781–Cys-3796, Cys-3805–Cys-3818, Cys-3812–Cys-3827, Cys-3829–Cys-3842, Cys-3848–Cys-3858, Cys-3854–Cys-3867, and Cys-3869–Cys-3880. Residue Asn-3682 is glycosylated (N-linked (GlcNAc...) asparagine). 2 EGF-like domains span residues 3801-3843 (TEYT…RQCE) and 3844-3881 (DLNE…NTCI). Asn-3877, Asn-3894, and Asn-3906 each carry an N-linked (GlcNAc...) asparagine glycan. 4 LDL-receptor class B repeats span residues 3933–3980 (DMII…DWVA), 3981–4038 (GNIY…NPKR), 4039–4082 (GMMY…DYFS), and 4083–4127 (ERIY…FEDY). N-linked (GlcNAc...) asparagine glycosylation occurs at Asn-4017. EGF-like domains lie at 4171-4208 (DLPN…GTCN), 4213-4249 (LDDS…ERCE), 4249-4285 (EVNH…PNCG), 4285-4321 (GKTV…DRCQ), 4321-4357 (QYYV…PKCE), 4357-4392 (EVDK…SSCQ), and 4390-4427 (SCQL…TQCE). Asn-4204 is a glycosylation site (N-linked (GlcNAc...) asparagine). Cystine bridges form between Cys-4217–Cys-4227, Cys-4221–Cys-4237, Cys-4253–Cys-4263, Cys-4257–Cys-4273, Cys-4275–Cys-4284, Cys-4289–Cys-4299, Cys-4293–Cys-4309, Cys-4311–Cys-4320, Cys-4325–Cys-4335, Cys-4329–Cys-4345, and Cys-4347–Cys-4356. Residue Asn-4381 is glycosylated (N-linked (GlcNAc...) asparagine). Disulfide bonds link Cys-4394/Cys-4404, Cys-4398/Cys-4415, and Cys-4417/Cys-4426. N-linked (GlcNAc...) asparagine glycosylation occurs at Asn-4420. Residues 4445-4467 (AIIVPLVLLVTLITTLVIGLVLC) traverse the membrane as a helical segment. The Cytoplasmic portion of the chain corresponds to 4468 to 4599 (KRKRRTKTIR…IEIGIRETVA (132 aa)). 2 short sequence motifs (endocytosis signal) span residues 4492-4495 (NPSY) and 4559-4562 (NPVY).

It belongs to the LDLR family. In terms of assembly, binds LRPAP1, PLAU, PLAT and SERPINE1; binding is followed by internalization and degradation of the ligands. As to expression, expressed in thyroid gland and in salivary gland, as well as in adult and fetal brain.

It is found in the membrane. Potential cell surface proteins that bind and internalize ligands in the process of receptor-mediated endocytosis. This is Low-density lipoprotein receptor-related protein 1B (LRP1B) from Homo sapiens (Human).